We begin with the raw amino-acid sequence, 391 residues long: Shewanella-like protein phosphatase 2 (391 aa).

4 residues coordinate Mn(2+): aspartate 61, histidine 63, aspartate 97, and asparagine 132. Histidine 133 functions as the Proton donor in the catalytic mechanism. Positions 232 and 295 each coordinate Mn(2+).

This sequence belongs to the metallophosphoesterase superfamily. SLP family. Requires Mn(2+) as cofactor. In terms of tissue distribution, expressed in roots and siliques (at protein level).

The protein localises to the cytoplasm. The protein resides in the cytosol. Shows phosphatase activity, hydrolyzing the artificial substrate para-nitrophenylphosphate (pNPP) in vitro. The polypeptide is Shewanella-like protein phosphatase 2 (Arabidopsis thaliana (Mouse-ear cress)).